Reading from the N-terminus, the 84-residue chain is Exodeoxyribonuclease 7 small subunit (84 aa).

This sequence belongs to the XseB family. In terms of assembly, heterooligomer composed of large and small subunits.

It is found in the cytoplasm. It catalyses the reaction Exonucleolytic cleavage in either 5'- to 3'- or 3'- to 5'-direction to yield nucleoside 5'-phosphates.. In terms of biological role, bidirectionally degrades single-stranded DNA into large acid-insoluble oligonucleotides, which are then degraded further into small acid-soluble oligonucleotides. This is Exodeoxyribonuclease 7 small subunit from Yersinia pseudotuberculosis serotype O:3 (strain YPIII).